A 348-amino-acid polypeptide reads, in one-letter code: MTAQPQTLKIRRPDDWHIHLRDDEMLSTVLPYTSEVFARAIVMPNLAQPITTVASAIAYRERILAAVPAGHKFTPLMTCYLTNSLDVKELTTGFEQGVFTAAKLYPANATTNSTHGVSDIPAIYPLFEQMQKIGMPLLIHGEVTDAAVDIFDREARFIDQILEPIRQKFPELKIVFEHITTKDAADYVLAGNRFLGATVTPQHLMFNRNHMLVGGIRPHLFCLPILKRSTHQQALRAAVASGSDRFFLGTDSAPHAKHRKESSCGCAGVFNAPAALPAYASVFEELNALQHLEAFCALNGPRFYGLPVNDDVVELVRTPFLQPEEIPLGNESVIPFLAGQTLNWSVKR.

Zn(2+) contacts are provided by His-17 and His-19. Residues 19–21 and Asn-45 contribute to the substrate site; that span reads HLR. 3 residues coordinate Zn(2+): Lys-103, His-140, and His-178. Lys-103 is subject to N6-carboxylysine. Position 140 (His-140) interacts with substrate. Leu-223 lines the substrate pocket. Zn(2+) is bound at residue Asp-251. The active site involves Asp-251. Residues His-255 and Ala-267 each coordinate substrate.

The protein belongs to the metallo-dependent hydrolases superfamily. DHOase family. Class II DHOase subfamily. As to quaternary structure, homodimer. Zn(2+) serves as cofactor.

The enzyme catalyses (S)-dihydroorotate + H2O = N-carbamoyl-L-aspartate + H(+). It participates in pyrimidine metabolism; UMP biosynthesis via de novo pathway; (S)-dihydroorotate from bicarbonate: step 3/3. In terms of biological role, catalyzes the reversible cyclization of carbamoyl aspartate to dihydroorotate. The protein is Dihydroorotase of Yersinia pseudotuberculosis serotype I (strain IP32953).